Reading from the N-terminus, the 901-residue chain is Protein translocase subunit SecA (901 aa).

ATP is bound by residues Q87, 105 to 109, and D512; that span reads GEGKT. The Zn(2+) site is built by C885, C887, C896, and H897.

The protein belongs to the SecA family. In terms of assembly, monomer and homodimer. Part of the essential Sec protein translocation apparatus which comprises SecA, SecYEG and auxiliary proteins SecDF-YajC and YidC. It depends on Zn(2+) as a cofactor.

It is found in the cell inner membrane. Its subcellular location is the cytoplasm. It carries out the reaction ATP + H2O + cellular proteinSide 1 = ADP + phosphate + cellular proteinSide 2.. Its function is as follows. Part of the Sec protein translocase complex. Interacts with the SecYEG preprotein conducting channel. Has a central role in coupling the hydrolysis of ATP to the transfer of proteins into and across the cell membrane, serving both as a receptor for the preprotein-SecB complex and as an ATP-driven molecular motor driving the stepwise translocation of polypeptide chains across the membrane. In Salmonella schwarzengrund (strain CVM19633), this protein is Protein translocase subunit SecA.